Reading from the N-terminus, the 102-residue chain is Small ribosomal subunit protein eS24 (102 aa).

Positions 70-102 (VYDSPAQAAEVEHDHMLERNKIGADDADAEEAE) are disordered. Positions 79–93 (EVEHDHMLERNKIGA) are enriched in basic and acidic residues.

The protein belongs to the eukaryotic ribosomal protein eS24 family.

The polypeptide is Small ribosomal subunit protein eS24 (Halobacterium salinarum (strain ATCC 29341 / DSM 671 / R1)).